A 668-amino-acid polypeptide reads, in one-letter code: Pentatricopeptide repeat-containing protein CRP1, chloroplastic (668 aa).

The transit peptide at M1–P64 directs the protein to the chloroplast. PPR repeat units follow at residues S154–P188, D189–P226, D227–P261, R262–P297, R298–P332, D333–P367, S368–P402, D403–P437, D438–P472, G473–P507, N508–P542, S543–V577, S578–P612, and D613–P647.

The protein belongs to the PPR family. P subfamily. As to quaternary structure, component of a multisubunit complex.

It localises to the plastid. The protein resides in the chloroplast stroma. In terms of biological role, required for the translation of the chloroplast petA and petD mRNAs. Required for the processing of the petD mRNA from a polycistronic precursor. Binds with high affinity to the 5'-UTR of the chloroplastic petA transcript. Activates psaC and petA translation by binding their 5'-UTRs. In Zea mays (Maize), this protein is Pentatricopeptide repeat-containing protein CRP1, chloroplastic.